Here is a 114-residue protein sequence, read N- to C-terminus: Nucleoid-associated protein MAB_0319 (114 aa).

This sequence belongs to the YbaB/EbfC family. As to quaternary structure, homodimer.

The protein resides in the cytoplasm. Its subcellular location is the nucleoid. Functionally, binds to DNA and alters its conformation. May be involved in regulation of gene expression, nucleoid organization and DNA protection. This Mycobacteroides abscessus (strain ATCC 19977 / DSM 44196 / CCUG 20993 / CIP 104536 / JCM 13569 / NCTC 13031 / TMC 1543 / L948) (Mycobacterium abscessus) protein is Nucleoid-associated protein MAB_0319.